A 175-amino-acid polypeptide reads, in one-letter code: Peptidyl-prolyl cis-trans isomerase B (175 aa).

One can recognise a PPIase cyclophilin-type domain in the interval 3-172 (EQLYATLKTN…EDVVIESVVV (170 aa)).

The protein belongs to the cyclophilin-type PPIase family.

It localises to the cytoplasm. The enzyme catalyses [protein]-peptidylproline (omega=180) = [protein]-peptidylproline (omega=0). Inhibited by cyclosporin A (CsA). PPIases accelerate the folding of proteins. It catalyzes the cis-trans isomerization of proline imidic peptide bonds in oligopeptides. The sequence is that of Peptidyl-prolyl cis-trans isomerase B (cypB) from Streptomyces anulatus (Streptomyces chrysomallus).